A 529-amino-acid chain; its full sequence is DEP domain-containing protein 1B (529 aa).

Residues 24–108 (FRAKMPLRKH…DNRHLYRFPP (85 aa)) enclose the DEP domain. Phosphoserine is present on serine 160. In terms of domain architecture, Rho-GAP spans 201-393 (DSLEEVLDVK…FLMDNYQEIL (193 aa)). Serine 436 carries the phosphoserine modification.

The protein is DEP domain-containing protein 1B (DEPDC1B) of Homo sapiens (Human).